The following is a 591-amino-acid chain: Phosphoglucan phosphatase LSF1, chloroplastic (591 aa).

Residues 1–61 (MAFLQQISGL…RRRRVVLRVV (61 aa)) constitute a chloroplast transit peptide. Residues 291–453 (RYSKITEQIY…VDDGKHDGTP (163 aa)) enclose the Tyrosine-protein phosphatase domain. Catalysis depends on C390, which acts as the Phosphocysteine intermediate. 390–396 (CTTGFDR) is a substrate binding site.

It localises to the plastid. The protein localises to the chloroplast. In terms of biological role, starch granule-associated phosphoglucan phosphatase involved in the control of starch accumulation. Participates in the regulation of the initial steps of starch degradation at the granule surface. May release a different set of phosphate groups from those removed by DSP4. The sequence is that of Phosphoglucan phosphatase LSF1, chloroplastic (LSF1) from Arabidopsis thaliana (Mouse-ear cress).